We begin with the raw amino-acid sequence, 513 residues long: MKLAYWMYAGPAHIGTLRVASSFKNVHAIMHAPLGDDYFNVMRSMLERERDFTPVTASIVDRHVLARGSQEKVVDNITKKDKQEHPDLIVLTPTCTSSILQEDLQNFVNRASMSSDSDVILADVNHYRVNELQAADRTLEQVVRYYLEKAHRQEKLNLSLTDKPSANIIGIFTLGFHNQHDCRELKRLLQDLGIMINQIIPEGGFVENLHELPKAWFNLVPYREVGLMTALYLEKEFGMPYISTTPMGIVDIANCIRQIQKQVNIWSPILLGKKFDFEPYIDEQTRFISQAAWFSRSIDCQNLTGKKAVVFGDATHAASITKILACEMGIRVSCTGTYCKHDEEWFREQVQNFCDEILITDDHTEVGDMIARIEPSAIFGTQMERHIGKRLDIPCGVISSPVHIQNFPLGYRPFLGYEGTNQIADLVYNSFTLGMEDHLLEIFGGHDTKEVITKSLSTDTDLTWNSESQLELNKIPGFVRGKIKRNTEKFARQNNITKITVEVMYAAKEDLSA.

Asp36 contacts [4Fe-4S] cluster. Asp299 acts as the Proton donor in catalysis. 434–435 (GM) is a substrate binding site.

The protein belongs to the ChlB/BchB/BchZ family. As to quaternary structure, protochlorophyllide reductase is composed of three subunits; ChlL, ChlN and ChlB. Forms a heterotetramer of two ChlB and two ChlN subunits. [4Fe-4S] cluster is required as a cofactor.

It is found in the plastid. The protein localises to the chloroplast. It catalyses the reaction chlorophyllide a + oxidized 2[4Fe-4S]-[ferredoxin] + 2 ADP + 2 phosphate = protochlorophyllide a + reduced 2[4Fe-4S]-[ferredoxin] + 2 ATP + 2 H2O. The protein operates within porphyrin-containing compound metabolism; chlorophyll biosynthesis (light-independent). In terms of biological role, component of the dark-operative protochlorophyllide reductase (DPOR) that uses Mg-ATP and reduced ferredoxin to reduce ring D of protochlorophyllide (Pchlide) to form chlorophyllide a (Chlide). This reaction is light-independent. The NB-protein (ChlN-ChlB) is the catalytic component of the complex. The chain is Light-independent protochlorophyllide reductase subunit B from Marchantia polymorpha (Common liverwort).